We begin with the raw amino-acid sequence, 453 residues long: Probable glycine dehydrogenase (decarboxylating) subunit 1 (453 aa).

This sequence belongs to the GcvP family. N-terminal subunit subfamily. In terms of assembly, the glycine cleavage system is composed of four proteins: P, T, L and H. In this organism, the P 'protein' is a heterodimer of two subunits.

The enzyme catalyses N(6)-[(R)-lipoyl]-L-lysyl-[glycine-cleavage complex H protein] + glycine + H(+) = N(6)-[(R)-S(8)-aminomethyldihydrolipoyl]-L-lysyl-[glycine-cleavage complex H protein] + CO2. The glycine cleavage system catalyzes the degradation of glycine. The P protein binds the alpha-amino group of glycine through its pyridoxal phosphate cofactor; CO(2) is released and the remaining methylamine moiety is then transferred to the lipoamide cofactor of the H protein. The sequence is that of Probable glycine dehydrogenase (decarboxylating) subunit 1 from Dictyoglomus turgidum (strain DSM 6724 / Z-1310).